Reading from the N-terminus, the 361-residue chain is tRNA/tmRNA (uracil-C(5))-methyltransferase (361 aa).

S-adenosyl-L-methionine-binding residues include Q183, Y211, N216, E232, and D294. The active-site Nucleophile is the C319. E353 serves as the catalytic Proton acceptor.

This sequence belongs to the class I-like SAM-binding methyltransferase superfamily. RNA M5U methyltransferase family. TrmA subfamily.

It catalyses the reaction uridine(54) in tRNA + S-adenosyl-L-methionine = 5-methyluridine(54) in tRNA + S-adenosyl-L-homocysteine + H(+). The catalysed reaction is uridine(341) in tmRNA + S-adenosyl-L-methionine = 5-methyluridine(341) in tmRNA + S-adenosyl-L-homocysteine + H(+). Its function is as follows. Dual-specificity methyltransferase that catalyzes the formation of 5-methyluridine at position 54 (m5U54) in all tRNAs, and that of position 341 (m5U341) in tmRNA (transfer-mRNA). This chain is tRNA/tmRNA (uracil-C(5))-methyltransferase, found in Acinetobacter baumannii (strain ACICU).